The chain runs to 301 residues: MSMLFPLHQQLIEQFTIFLSVDRGIAPLSVQAYCQDILLFLQRVPIETTDMINQESVFLFVEKCHQAKESETTLARRLIALKVFFHFLKDAKLIHQQPFIEHPKVWKRLPSILSTEEVNSLLNQPLNTLNLDAYIANRDTAILYTFYATGIRVSELCDLCIGDISDDFIRVTGKGRKTRLVPISIKARQTIDSYLTMFRERFQKKNPSEEHVFLSIRGKKLERSCVWKRITFYAKLVTTKHISPHSLRHAFATHLLNNQADLRIIQEMLGHARISSTEIYTHVASESIIEKFHTHHPRSSS.

In terms of domain architecture, Core-binding (CB) spans 6 to 89; sequence PLHQQLIEQF…ALKVFFHFLK (84 aa). One can recognise a Tyr recombinase domain in the interval 108-293; the sequence is RLPSILSTEE…ASESIIEKFH (186 aa). Active-site residues include Arg152, Lys174, His245, Arg248, and His271. Tyr280 acts as the O-(3'-phospho-DNA)-tyrosine intermediate in catalysis.

This sequence belongs to the 'phage' integrase family. XerD subfamily. As to quaternary structure, forms a cyclic heterotetrameric complex composed of two molecules of XerC and two molecules of XerD.

It is found in the cytoplasm. Its function is as follows. Site-specific tyrosine recombinase, which acts by catalyzing the cutting and rejoining of the recombining DNA molecules. The XerC-XerD complex is essential to convert dimers of the bacterial chromosome into monomers to permit their segregation at cell division. It also contributes to the segregational stability of plasmids. This Chlamydia muridarum (strain MoPn / Nigg) protein is Tyrosine recombinase XerD.